Here is a 184-residue protein sequence, read N- to C-terminus: Interferon alpha-3 (184 aa).

The N-terminal stretch at 1 to 23 (MALPVSLLMALVVLSCHSSCSLG) is a signal peptide. Disulfide bonds link cysteine 24–cysteine 122 and cysteine 52–cysteine 162.

This sequence belongs to the alpha/beta interferon family.

The protein resides in the secreted. Produced by macrophages, IFN-alpha have antiviral activities. Interferon stimulates the production of two enzymes: a protein kinase and an oligoadenylate synthetase. This Equus caballus (Horse) protein is Interferon alpha-3.